Here is a 136-residue protein sequence, read N- to C-terminus: MGRVRTKTVKRASKALIERYYPKLTLDFQTNKRLCDEIATIQSKRLRNKIAGYTTHLMKRIQKGPVRGISFKLQEEERERKDQYVPEVSALDLSRSNGVLNVDNQTSDLVKSLGLKLPLSVINVSAQRDRRYRKRV.

It belongs to the eukaryotic ribosomal protein eS17 family. As to quaternary structure, component of the small ribosomal subunit (SSU). Mature yeast ribosomes consist of a small (40S) and a large (60S) subunit. The 40S small subunit contains 1 molecule of ribosomal RNA (18S rRNA) and 33 different proteins (encoded by 57 genes). The large 60S subunit contains 3 rRNA molecules (25S, 5.8S and 5S rRNA) and 46 different proteins (encoded by 81 genes).

It is found in the cytoplasm. In terms of biological role, component of the ribosome, a large ribonucleoprotein complex responsible for the synthesis of proteins in the cell. The small ribosomal subunit (SSU) binds messenger RNAs (mRNAs) and translates the encoded message by selecting cognate aminoacyl-transfer RNA (tRNA) molecules. The large subunit (LSU) contains the ribosomal catalytic site termed the peptidyl transferase center (PTC), which catalyzes the formation of peptide bonds, thereby polymerizing the amino acids delivered by tRNAs into a polypeptide chain. The nascent polypeptides leave the ribosome through a tunnel in the LSU and interact with protein factors that function in enzymatic processing, targeting, and the membrane insertion of nascent chains at the exit of the ribosomal tunnel. The sequence is that of Small ribosomal subunit protein eS17A from Saccharomyces cerevisiae (strain ATCC 204508 / S288c) (Baker's yeast).